A 38-amino-acid polypeptide reads, in one-letter code: Photosystem II reaction center protein L (38 aa).

Residues 17–37 (SLFWGLLLIFVLAVLFSSYFF) form a helical membrane-spanning segment.

It belongs to the PsbL family. PSII is composed of 1 copy each of membrane proteins PsbA, PsbB, PsbC, PsbD, PsbE, PsbF, PsbH, PsbI, PsbJ, PsbK, PsbL, PsbM, PsbT, PsbX, PsbY, PsbZ, Psb30/Ycf12, at least 3 peripheral proteins of the oxygen-evolving complex and a large number of cofactors. It forms dimeric complexes.

It is found in the plastid. It localises to the chloroplast thylakoid membrane. One of the components of the core complex of photosystem II (PSII). PSII is a light-driven water:plastoquinone oxidoreductase that uses light energy to abstract electrons from H(2)O, generating O(2) and a proton gradient subsequently used for ATP formation. It consists of a core antenna complex that captures photons, and an electron transfer chain that converts photonic excitation into a charge separation. This subunit is found at the monomer-monomer interface and is required for correct PSII assembly and/or dimerization. This chain is Photosystem II reaction center protein L, found in Rhodomonas salina (Cryptomonas salina).